Here is a 560-residue protein sequence, read N- to C-terminus: Putative transport protein VP1232 (560 aa).

The next 5 helical transmembrane spans lie at 8-28, 37-57, 66-86, 91-111, and 164-184; these read LLDQ…LAIG, LGNS…GFSF, FMLF…GIFF, HYFI…YGLS, and VGYA…AKLL. RCK C-terminal domains are found at residues 205 to 292 and 293 to 376; these read LGNS…FRNG and KEVF…KIGF. 6 consecutive transmembrane segments (helical) span residues 386-406, 409-429, 443-463, 478-498, 506-526, and 539-559; these read LLAF…TMTF, VSFS…LGFL, ALNM…GLSA, VIGL…LVGA, ALLF…DVVN, and AGTY…LIIL.

Belongs to the AAE transporter (TC 2.A.81) family. YbjL subfamily.

The protein resides in the cell membrane. The chain is Putative transport protein VP1232 from Vibrio parahaemolyticus serotype O3:K6 (strain RIMD 2210633).